The sequence spans 143 residues: Nucleoside diphosphate kinase (143 aa).

Lys11, Phe59, Arg87, Thr93, Arg104, and Asn114 together coordinate ATP. Residue His117 is the Pros-phosphohistidine intermediate of the active site.

The protein belongs to the NDK family. Homotetramer. The cofactor is Mg(2+).

It is found in the cytoplasm. The enzyme catalyses a 2'-deoxyribonucleoside 5'-diphosphate + ATP = a 2'-deoxyribonucleoside 5'-triphosphate + ADP. It catalyses the reaction a ribonucleoside 5'-diphosphate + ATP = a ribonucleoside 5'-triphosphate + ADP. Major role in the synthesis of nucleoside triphosphates other than ATP. The ATP gamma phosphate is transferred to the NDP beta phosphate via a ping-pong mechanism, using a phosphorylated active-site intermediate. This Shewanella frigidimarina (strain NCIMB 400) protein is Nucleoside diphosphate kinase.